The sequence spans 290 residues: Serine protease 27 (290 aa).

A signal peptide spans 1–22 (MRRPAAVPLLLLLCFGSQRAKA). The propeptide at 23 to 34 (ATACGRPRMLNR) is activation peptide. One can recognise a Peptidase S1 domain in the interval 35 to 277 (MVGGQDTQEG…HHNWIHRIIP (243 aa)). Asparagine 55 carries N-linked (GlcNAc...) asparagine glycosylation. A disulfide bridge connects residues cysteine 60 and cysteine 76. Catalysis depends on histidine 75, which acts as the Charge relay system. Residue asparagine 79 is glycosylated (N-linked (GlcNAc...) asparagine). The active-site Charge relay system is the aspartate 124. 3 disulfides stabilise this stretch: cysteine 158–cysteine 235, cysteine 191–cysteine 214, and cysteine 225–cysteine 253. Serine 229 functions as the Charge relay system in the catalytic mechanism.

It belongs to the peptidase S1 family. N-glycosylated. Expressed predominantly in the pancreas.

It is found in the secreted. The chain is Serine protease 27 (PRSS27) from Homo sapiens (Human).